We begin with the raw amino-acid sequence, 129 residues long: UPF0102 protein RD1_1191 (129 aa).

It belongs to the UPF0102 family.

This Roseobacter denitrificans (strain ATCC 33942 / OCh 114) (Erythrobacter sp. (strain OCh 114)) protein is UPF0102 protein RD1_1191.